The sequence spans 412 residues: Putative competence-damage inducible protein (412 aa).

The protein belongs to the CinA family.

This is Putative competence-damage inducible protein from Bacillus cereus (strain ATCC 10987 / NRS 248).